We begin with the raw amino-acid sequence, 361 residues long: Spermidine/putrescine import ATP-binding protein PotA (361 aa).

The 231-residue stretch at 4 to 234 (LELRDVTRRF…PANRFIADFI (231 aa)) folds into the ABC transporter domain. 36–43 (GPSGCGKT) provides a ligand contact to ATP.

Belongs to the ABC transporter superfamily. Spermidine/putrescine importer (TC 3.A.1.11.1) family. As to quaternary structure, the complex is composed of two ATP-binding proteins (PotA), two transmembrane proteins (PotB and PotC) and a solute-binding protein (PotD).

It localises to the cell inner membrane. It catalyses the reaction ATP + H2O + polyamine-[polyamine-binding protein]Side 1 = ADP + phosphate + polyamineSide 2 + [polyamine-binding protein]Side 1.. Functionally, part of the ABC transporter complex PotABCD involved in spermidine/putrescine import. Responsible for energy coupling to the transport system. In Nitrosomonas europaea (strain ATCC 19718 / CIP 103999 / KCTC 2705 / NBRC 14298), this protein is Spermidine/putrescine import ATP-binding protein PotA.